Here is a 100-residue protein sequence, read N- to C-terminus: Nucleoid-associated protein MYPU_0500 (100 aa).

This sequence belongs to the YbaB/EbfC family. Homodimer.

The protein localises to the cytoplasm. It localises to the nucleoid. Functionally, binds to DNA and alters its conformation. May be involved in regulation of gene expression, nucleoid organization and DNA protection. This is Nucleoid-associated protein MYPU_0500 from Mycoplasmopsis pulmonis (strain UAB CTIP) (Mycoplasma pulmonis).